A 406-amino-acid chain; its full sequence is CinA-like protein (406 aa).

Belongs to the CinA family.

The protein is CinA-like protein of Pseudothermotoga lettingae (strain ATCC BAA-301 / DSM 14385 / NBRC 107922 / TMO) (Thermotoga lettingae).